Here is a 416-residue protein sequence, read N- to C-terminus: Major facilitator superfamily domain-containing protein 3 (416 aa).

A run of 12 helical transmembrane segments spans residues 10–30 (GLYL…PILL), 40–60 (VGLT…APLV), 68–88 (VWLT…AVLP), 99–119 (TTVM…DVAL), 139–158 (QVVA…LVFF), 170–190 (LTAT…LGRL), 204–224 (YLLQ…FVLT), 252–272 (LWSG…GGAL), 295–315 (LGGL…GASL), 324–344 (AALL…TATF), 365–385 (FLAT…GVLA), and 392–412 (LCFA…RLAP).

Belongs to the major facilitator superfamily.

The protein localises to the membrane. In Rattus norvegicus (Rat), this protein is Major facilitator superfamily domain-containing protein 3 (Mfsd3).